We begin with the raw amino-acid sequence, 131 residues long: MEKIEKTLEEWRAMLDPEQFNVCRLSATERPFSGKYNATKTDGVYHCICCNEPLFDSKTKFDSGCGWPSFYAPIGDNAMTEIRDTSHGMIRTEVKCAKCDAHLGHVFPDGPPPTGLRYCINSVCLDLVPRE.

The 123-residue stretch at leucine 8–arginine 130 folds into the MsrB domain. 4 residues coordinate Zn(2+): cysteine 47, cysteine 50, cysteine 96, and cysteine 99. The active-site Nucleophile is cysteine 119.

Belongs to the MsrB Met sulfoxide reductase family. Zn(2+) is required as a cofactor.

It catalyses the reaction L-methionyl-[protein] + [thioredoxin]-disulfide + H2O = L-methionyl-(R)-S-oxide-[protein] + [thioredoxin]-dithiol. This is Peptide methionine sulfoxide reductase MsrB from Pseudomonas fluorescens (strain Pf0-1).